The following is a 100-amino-acid chain: Urease subunit gamma (100 aa).

This sequence belongs to the urease gamma subunit family. In terms of assembly, heterotrimer of UreA (gamma), UreB (beta) and UreC (alpha) subunits. Three heterotrimers associate to form the active enzyme.

It localises to the cytoplasm. The catalysed reaction is urea + 2 H2O + H(+) = hydrogencarbonate + 2 NH4(+). It functions in the pathway nitrogen metabolism; urea degradation; CO(2) and NH(3) from urea (urease route): step 1/1. The polypeptide is Urease subunit gamma (Rhizobium etli (strain CIAT 652)).